An 856-amino-acid polypeptide reads, in one-letter code: V-type proton ATPase 116 kDa subunit a 2 (856 aa).

Topologically, residues 1–393 are cytoplasmic; sequence MGSLFRSETM…DAYGVGSYRE (393 aa). The helical transmembrane segment at 394–412 threads the bilayer; that stretch reads VNPALFTIITFPFLFAVMF. At 413–414 the chain is on the vacuolar side; sequence GD. The helical transmembrane segment at 415-431 threads the bilayer; sequence FGHGFVMFLFALLLVLN. The Cytoplasmic portion of the chain corresponds to 432-445; it reads ENHPRLNQSQEIMR. Residues 446–475 form a helical membrane-spanning segment; the sequence is MFFNGRYILLLMGLFSVYTGLIYNDCFSKS. Residues 476-549 lie on the Vacuolar side of the membrane; that stretch reads VNLFGSGWNV…ATNRLTFLNS (74 aa). N-linked (GlcNAc...) asparagine glycosylation is found at Asn-484 and Asn-505. Residues 550–569 traverse the membrane as a helical segment; sequence FKMKMSVILGIIHMTFGVIL. Over 570-587 the chain is Cytoplasmic; it reads GIFNHLHFRKKFNIYLVS. A helical membrane pass occupies residues 588-608; that stretch reads IPELLFMLCIFGYLIFMIFYK. Residues 609–651 are Vacuolar-facing; sequence WLVFSAETSRVAPSILIEFINMFLFPASKTSGLYTGQEYVQRV. The helical transmembrane segment at 652-671 threads the bilayer; it reads LLVVTALSVPVLFLGKPLFL. Residues 672 to 739 are Cytoplasmic-facing; it reads LWLHNGRSCF…EILMTQVIHS (68 aa). Phosphoserine is present on residues Ser-695 and Ser-700. A helical transmembrane segment spans residues 740–764; that stretch reads IEYCLGCISNTASYLRLWALSLAHA. Residues 765 to 785 lie on the Vacuolar side of the membrane; that stretch reads QLSDVLWAMLMRVGLRVDTTY. The chain crosses the membrane as a helical span at residues 786 to 824; that stretch reads GVLLLLPVIALFAVLTIFILLIMEGLSAFLHAIRLHWVE. Over 825-856 the chain is Cytoplasmic; that stretch reads FQNKFYVGAGTKFVPFSFSLLSSKFNNDDSVA.

This sequence belongs to the V-ATPase 116 kDa subunit family. As to quaternary structure, V-ATPase is a heteromultimeric enzyme made up of two complexes: the ATP-hydrolytic V1 complex and the proton translocation V0 complex. The V1 complex consists of three catalytic AB heterodimers that form a heterohexamer, three peripheral stalks each consisting of EG heterodimers, one central rotor including subunits D and F, and the regulatory subunits C and H. The proton translocation complex V0 consists of the proton transport subunit a, a ring of proteolipid subunits c9c'', rotary subunit d, subunits e and f, and the accessory subunits ATP6AP1/Ac45 and ATP6AP2/PRR. Directly interacts with PSCD2 through its N-terminal cytosolic tail in an intra-endosomal acidification-dependent manner. Disruption of this interaction results in the inhibition of endocytosis. Interacts with SPAAR.

Its subcellular location is the cell membrane. It localises to the endosome membrane. Its function is as follows. Subunit of the V0 complex of vacuolar(H+)-ATPase (V-ATPase), a multisubunit enzyme composed of a peripheral complex (V1) that hydrolyzes ATP and a membrane integral complex (V0) that translocates protons. V-ATPase is responsible for acidifying and maintaining the pH of intracellular compartments and in some cell types, is targeted to the plasma membrane, where it is responsible for acidifying the extracellular environment. Essential component of the endosomal pH-sensing machinery. May play a role in maintaining the Golgi functions, such as glycosylation maturation, by controlling the Golgi pH. In aerobic conditions, involved in intracellular iron homeostasis, thus triggering the activity of Fe(2+) prolyl hydroxylase (PHD) enzymes, and leading to HIF1A hydroxylation and subsequent proteasomal degradation. The protein is V-type proton ATPase 116 kDa subunit a 2 (ATP6V0A2) of Homo sapiens (Human).